Reading from the N-terminus, the 201-residue chain is Ubiquitin-conjugating enzyme E2 E2 (201 aa).

Residues 1–10 (MSTEAQRVDD) show a composition bias toward basic and acidic residues. Residues 1-55 (MSTEAQRVDDSPSTSGGSSDGDQRESVQQEPDREQVQPKKKEGKISSKTAAKLST) are disordered. The residue at position 2 (S2) is an N-acetylserine. Residues S11, S15, S18, and S19 each carry the phosphoserine modification. Residues 21–45 (GDQRESVQQEPDREQVQPKKKEGKI) are compositionally biased toward basic and acidic residues. Positions 46-55 (SSKTAAKLST) are enriched in low complexity. A UBC core domain is found at 55-201 (TSAKRIQKEL…ARQWTKRYAT (147 aa)). The active-site Glycyl thioester intermediate is C139.

This sequence belongs to the ubiquitin-conjugating enzyme family. In terms of processing, autoubiquitinated.

The catalysed reaction is S-ubiquitinyl-[E1 ubiquitin-activating enzyme]-L-cysteine + [E2 ubiquitin-conjugating enzyme]-L-cysteine = [E1 ubiquitin-activating enzyme]-L-cysteine + S-ubiquitinyl-[E2 ubiquitin-conjugating enzyme]-L-cysteine.. It functions in the pathway protein modification; protein ubiquitination. Accepts ubiquitin from the E1 complex and catalyzes its covalent attachment to other proteins. In vitro catalyzes 'Lys-11'- and 'Lys-48'-, as well as 'Lys-63'-linked polyubiquitination. Catalyzes the ISGylation of influenza A virus NS1 protein. This is Ubiquitin-conjugating enzyme E2 E2 (Ube2e2) from Mus musculus (Mouse).